Reading from the N-terminus, the 398-residue chain is MFLKNIFIALAIALLVDATPTTTKRSAGFVALDFSVVKTPKAFPVTNGQEGKTSKRQAVPVTLHNEQVTYAADITVGSNNQKLNVIVDTGSSDLWVPDVNVDCQVTYSDQTADFCKQKGTYDPSGSSASQDLNTPFKIGYGDGSSSQGTLYKDTVGFGGVSIKNQVLADVDSTSIDQGILGVGYKTNEAGGSYDNVPVTLKKQGVIAKNAYSLYLNSPDAATGQIIFGGVDNAKYSGSLIALPVTSDRELRISLGSVEVSGKTINTDNVDVLLDSGTTITYLQQDLADQIIKAFNGKLTQDSNGNSFYEVDCNLSGDVVFNFSKNAKISVPASEFAASLQGDDGQPYDKCQLLFDVNDANILGDNFLRSAYIVYDLDDNEISLAQVKYTSASSISALT.

The signal sequence occupies residues 1 to 18 (MFLKNIFIALAIALLVDA). A propeptide spans 19-56 (TPTTTKRSAGFVALDFSVVKTPKAFPVTNGQEGKTSKR) (activation peptide). One can recognise a Peptidase A1 domain in the interval 70–384 (YAADITVGSN…DLDDNEISLA (315 aa)). Residue Asp88 is part of the active site. Position 88–90 (88–90 (DTG)) interacts with pepstatin A. Cysteines 103 and 115 form a disulfide. Position 141–142 (141–142 (GD)) interacts with pepstatin A. Zn(2+) is bound by residues Asp247 and Asp270. Asp274 is an active-site residue. 274–278 (DSGTT) is a pepstatin A binding site. Cys312 and Cys350 are oxidised to a cystine. Asn313 and Asn321 each carry an N-linked (GlcNAc...) asparagine glycan.

It belongs to the peptidase A1 family. In terms of assembly, monomer.

The protein resides in the secreted. The catalysed reaction is Preferential cleavage at the carboxyl of hydrophobic amino acids, but fails to cleave 15-Leu-|-Tyr-16, 16-Tyr-|-Leu-17 and 24-Phe-|-Phe-25 of insulin B chain. Activates trypsinogen, and degrades keratin.. Its function is as follows. Secreted aspartic peptidases (SAPs) are a group of ten acidic hydrolases considered as key virulence factors. These enzymes supply the fungus with nutrient amino acids as well as are able to degrade the selected host's proteins involved in the immune defense. Induces host inflammatory cytokine production in a proteolytic activity-independent way. Plays a role in tissue damage during superficial infection. Moreover, acts toward human hemoglobin though limited proteolysis to generate a variety of antimicrobial hemocidins, enabling to compete with the other microorganisms of the same physiological niche using the microbicidal peptides generated from the host protein. In terms of biological role, plays a key role in defense against host by cleaving histatin-5 (Hst 5), a peptide from human saliva that carries out fungicidal activity. The cleavage rate decreases in an order of SAP2 &gt; SAP9 &gt; SAP3 &gt; SAP7 &gt; SAP4 &gt; SAP1 &gt; SAP8. The first cleavage occurs between residues 'Lys-17' and 'His-18' of Hst 5, giving DSHAKRHHGYKRKFHEK and HHSHRGY peptides. Simultaneously, the DSHAKRHHGYKRK peptide is also formed. Further fragmentation by SAP2 results in FHEK and DSHAKRHHGY products. In Candida albicans (Yeast), this protein is Secreted aspartic protease 2.